Here is a 512-residue protein sequence, read N- to C-terminus: 2,3-bisphosphoglycerate-independent phosphoglycerate mutase (512 aa).

Positions 14 and 64 each coordinate Mn(2+). S64 acts as the Phosphoserine intermediate in catalysis. Substrate is bound by residues H125, 155–156 (RD), R187, R193, 259–262 (RADR), and K332. Mn(2+)-binding residues include D399, H403, D440, H441, and H459.

It belongs to the BPG-independent phosphoglycerate mutase family. In terms of assembly, monomer. It depends on Mn(2+) as a cofactor.

The catalysed reaction is (2R)-2-phosphoglycerate = (2R)-3-phosphoglycerate. It functions in the pathway carbohydrate degradation; glycolysis; pyruvate from D-glyceraldehyde 3-phosphate: step 3/5. Functionally, catalyzes the interconversion of 2-phosphoglycerate and 3-phosphoglycerate. This chain is 2,3-bisphosphoglycerate-independent phosphoglycerate mutase, found in Ruthia magnifica subsp. Calyptogena magnifica.